The following is a 130-amino-acid chain: Riboflavin kinase (130 aa).

12–17 (GLGVGA) is a binding site for CDP. Residues Thr39 and Asn41 each coordinate Mg(2+). Residues Thr90 and Glu98 each contribute to the FMN site. Position 103 to 106 (103 to 106 (KNLR)) interacts with CDP.

This sequence belongs to the archaeal riboflavin kinase family. It depends on Mg(2+) as a cofactor.

The catalysed reaction is riboflavin + CTP = CDP + FMN + H(+). The protein operates within cofactor biosynthesis; FMN biosynthesis; FMN from riboflavin (CTP route): step 1/1. In terms of biological role, catalyzes the CTP-dependent phosphorylation of riboflavin (vitamin B2) to form flavin mononucleotide (FMN). The chain is Riboflavin kinase from Staphylothermus marinus (strain ATCC 43588 / DSM 3639 / JCM 9404 / F1).